We begin with the raw amino-acid sequence, 681 residues long: MQKGNIGVTTENIFPIIKKFLYSDHEIFLRELVSNAVDATQKLNTLASISEFKGELGDLTVHVSLGKDTITISDRGIGLTAEEIDKYINQIAFSGANDFLEKYKNDANAIIGHFGLGFYSAFMVSKKVEIITKSYKEGAQAVKWTCDGSPEFTLEEVEKADRGTDIVLYIDDDCKEFLEESRISALLKKYCSFLPVPIAFGKKKEWKDGKQVETAEDNVINDTIPLWTKKPSELSDEDYKKFYRELYPMSDEPLFWIHLNVDYPFHLTGILYFPKVKSNIDLNKNKIQLYCNQVYVTDSVEGIVPDFLTLLHGVLDSPDIPLNVSRSYLQSDSNVKKISTYISKKVSDRLQSIFKNDRAQFEEKWNDLKIFINYGMLTQEDFYDKAQKFALFTDTDGKHYTFEEYQTLIKDNQTDKDKNLIYLYANNKDEQFAYIEAAKNKGYNVLLMDGQLDVAMVSMLEQKLEKSRFTRVDSDVVDNLIVKEDKKSDVLEASKQEALSAAFKSQLPKMEKVEFNVMIQALGENGSPVMITQSEYMRRMKEMANIQAGMSFYGEMPDMFNLVLNSDHKLVKEVLADEEKECSAAIAPIQTELEDVTKRRDALKKKQEGKKDEDIPTAEKDELNDLDKKWDELKQQKDSIFAGYAGKNKVVRQLIDLALLQNNMLKGEALNNFVKRSIELI.

The interval 1–326 is a; substrate-binding; the sequence is MQKGNIGVTT…SPDIPLNVSR (326 aa). The interval 327-545 is b; the sequence is SYLQSDSNVK…YMRRMKEMAN (219 aa). The c stretch occupies residues 546 to 681; it reads IQAGMSFYGE…NFVKRSIELI (136 aa). A disordered region spans residues 601–620; sequence DALKKKQEGKKDEDIPTAEK.

The protein belongs to the heat shock protein 90 family. In terms of assembly, homodimer.

It localises to the cytoplasm. Molecular chaperone. Has ATPase activity. This chain is Chaperone protein htpG, found in Bacteroides fragilis (strain 638R).